Consider the following 145-residue polypeptide: Large-conductance mechanosensitive channel (145 aa).

The next 2 membrane-spanning stretches (helical) occupy residues 14-34 and 81-101; these read VIDL…VDSL and GIFI…FLMV.

This sequence belongs to the MscL family. Homopentamer.

Its subcellular location is the cell inner membrane. Channel that opens in response to stretch forces in the membrane lipid bilayer. May participate in the regulation of osmotic pressure changes within the cell. The sequence is that of Large-conductance mechanosensitive channel from Pelobacter propionicus (strain DSM 2379 / NBRC 103807 / OttBd1).